The sequence spans 228 residues: Tol-Pal system protein TolQ (228 aa).

Helical transmembrane passes span isoleucine 16–isoleucine 36, valine 137–leucine 157, and isoleucine 172–alanine 192.

The protein belongs to the ExbB/TolQ family. The Tol-Pal system is composed of five core proteins: the inner membrane proteins TolA, TolQ and TolR, the periplasmic protein TolB and the outer membrane protein Pal. They form a network linking the inner and outer membranes and the peptidoglycan layer.

It localises to the cell inner membrane. Part of the Tol-Pal system, which plays a role in outer membrane invagination during cell division and is important for maintaining outer membrane integrity. This is Tol-Pal system protein TolQ from Haemophilus influenzae (strain ATCC 51907 / DSM 11121 / KW20 / Rd).